A 757-amino-acid polypeptide reads, in one-letter code: Probable inorganic carbon transporter subunit DabA (757 aa).

The Zn(2+) site is built by C321, D323, H475, and C490.

Belongs to the inorganic carbon transporter (TC 9.A.2) DabA family. As to quaternary structure, forms a complex with DabB. Zn(2+) is required as a cofactor.

The protein localises to the cell inner membrane. Part of an energy-coupled inorganic carbon pump. This is Probable inorganic carbon transporter subunit DabA from Idiomarina loihiensis (strain ATCC BAA-735 / DSM 15497 / L2-TR).